The primary structure comprises 101 residues: NADH-quinone oxidoreductase subunit K (101 aa).

Helical transmembrane passes span 4–24, 30–50, and 61–81; these read LAHF…GIFL, IVLL…FVAF, and VFVF…LAIL.

This sequence belongs to the complex I subunit 4L family. As to quaternary structure, NDH-1 is composed of 14 different subunits. Subunits NuoA, H, J, K, L, M, N constitute the membrane sector of the complex.

It is found in the cell inner membrane. It carries out the reaction a quinone + NADH + 5 H(+)(in) = a quinol + NAD(+) + 4 H(+)(out). In terms of biological role, NDH-1 shuttles electrons from NADH, via FMN and iron-sulfur (Fe-S) centers, to quinones in the respiratory chain. The immediate electron acceptor for the enzyme in this species is believed to be ubiquinone. Couples the redox reaction to proton translocation (for every two electrons transferred, four hydrogen ions are translocated across the cytoplasmic membrane), and thus conserves the redox energy in a proton gradient. The chain is NADH-quinone oxidoreductase subunit K from Cupriavidus necator (strain ATCC 17699 / DSM 428 / KCTC 22496 / NCIMB 10442 / H16 / Stanier 337) (Ralstonia eutropha).